We begin with the raw amino-acid sequence, 300 residues long: MRHDNDSWDITTSVGSTALFVAASRALEARKPDPLAVDPYAEVFCRAAGGDWAGLFDAGADPKPDHVLFSEFGEQFVNFQGARTRYFDAYFAAASDAGVRQVVLLAAGLDSRAYRLPWPDGTVVYELDQPRVLEFKREVLAERGEQPVAQRREVAVDLRDDWCAALTAAGFDPARPSAWLAEGLLMYLPATAQEALFSGIDALSAPRSWAAVEESVPMPAEVFAYKREEERAAGEEGTFFTLVYNERHAPAERWFGERGWAAEPTSLADYLTRVGRPAPVDDPEFGAMISAIRLVTATKG.

Residues Asp-128 and 157–158 each bind S-adenosyl-L-methionine; that span reads DL.

This sequence belongs to the UPF0677 family.

Exhibits S-adenosyl-L-methionine-dependent methyltransferase activity. The polypeptide is Putative S-adenosyl-L-methionine-dependent methyltransferase Mkms_0379 (Mycobacterium sp. (strain KMS)).